Consider the following 280-residue polypeptide: ATP synthase subunit a (280 aa).

Helical transmembrane passes span 45 to 65, 105 to 125, 126 to 146, 159 to 179, 190 to 210, 223 to 243, and 250 to 270; these read AINV…LFLF, LVAP…LMDL, LPVD…LKVV, LSIF…GGFF, FLFP…PISL, MIFI…LFGG, and AVFH…LTIV.

Belongs to the ATPase A chain family. F-type ATPases have 2 components, CF(1) - the catalytic core - and CF(0) - the membrane proton channel. CF(1) has five subunits: alpha(3), beta(3), gamma(1), delta(1), epsilon(1). CF(0) has three main subunits: a(1), b(2) and c(9-12). The alpha and beta chains form an alternating ring which encloses part of the gamma chain. CF(1) is attached to CF(0) by a central stalk formed by the gamma and epsilon chains, while a peripheral stalk is formed by the delta and b chains.

The protein resides in the cell inner membrane. Functionally, key component of the proton channel; it plays a direct role in the translocation of protons across the membrane. The sequence is that of ATP synthase subunit a from Thiobacillus denitrificans (strain ATCC 25259 / T1).